Here is a 455-residue protein sequence, read N- to C-terminus: Glutamyl-tRNA reductase (455 aa).

Residues 49–52 (TCNR), S109, 114–116 (EAQ), and Q120 contribute to the substrate site. C50 (nucleophile) is an active-site residue. 190–195 (GAGAMG) lines the NADP(+) pocket.

This sequence belongs to the glutamyl-tRNA reductase family. As to quaternary structure, homodimer.

The enzyme catalyses (S)-4-amino-5-oxopentanoate + tRNA(Glu) + NADP(+) = L-glutamyl-tRNA(Glu) + NADPH + H(+). It participates in porphyrin-containing compound metabolism; protoporphyrin-IX biosynthesis; 5-aminolevulinate from L-glutamyl-tRNA(Glu): step 1/2. Functionally, catalyzes the NADPH-dependent reduction of glutamyl-tRNA(Glu) to glutamate 1-semialdehyde (GSA). The sequence is that of Glutamyl-tRNA reductase from Salinispora tropica (strain ATCC BAA-916 / DSM 44818 / JCM 13857 / NBRC 105044 / CNB-440).